The sequence spans 180 residues: Large ribosomal subunit protein mL41 (180 aa).

A mitochondrion-targeting transit peptide spans 1–21 (MKLVLVSTRGVRSLNSTNFPA).

It belongs to the mitochondrion-specific ribosomal protein mL41 family. Component of the mitochondrial ribosome large subunit (39S) which comprises a 16S rRNA and about 50 distinct proteins.

The protein resides in the mitochondrion. This is Large ribosomal subunit protein mL41 (mrpl-41) from Caenorhabditis elegans.